Consider the following 277-residue polypeptide: Shikimate dehydrogenase (NADP(+)) (277 aa).

Residues 15–17 and threonine 62 each bind shikimate; that span reads SLS. Lysine 66 (proton acceptor) is an active-site residue. Positions 87 and 102 each coordinate shikimate. NADP(+) contacts are provided by residues 127-131, 151-156, and isoleucine 219; these read GAGGA and NRTVDK. Tyrosine 221 provides a ligand contact to shikimate. Position 242 (glycine 242) interacts with NADP(+).

It belongs to the shikimate dehydrogenase family. In terms of assembly, homodimer.

It catalyses the reaction shikimate + NADP(+) = 3-dehydroshikimate + NADPH + H(+). It participates in metabolic intermediate biosynthesis; chorismate biosynthesis; chorismate from D-erythrose 4-phosphate and phosphoenolpyruvate: step 4/7. Involved in the biosynthesis of the chorismate, which leads to the biosynthesis of aromatic amino acids. Catalyzes the reversible NADPH linked reduction of 3-dehydroshikimate (DHSA) to yield shikimate (SA). The polypeptide is Shikimate dehydrogenase (NADP(+)) (Bacillus cereus (strain AH187)).